The sequence spans 212 residues: uncharacterized protein (212 aa).

An SIS domain is found at 46–198 (LERVYREKRK…IYSLMTRLGI (153 aa)).

The protein belongs to the SIS family. PHI subfamily.

This is an uncharacterized protein from Aeropyrum pernix (strain ATCC 700893 / DSM 11879 / JCM 9820 / NBRC 100138 / K1).